The chain runs to 390 residues: Pyruvate dehydrogenase E1 component subunit alpha-1, mitochondrial (390 aa).

The transit peptide at 1–15 (MAAAILLRRVPPARA) directs the protein to the mitochondrion. His-91, Tyr-117, Arg-118, Gly-166, Val-168, Asp-197, Gly-198, Ala-199, Asn-226, and Tyr-228 together coordinate pyruvate. Thiamine diphosphate contacts are provided by Tyr-117, Arg-118, Gly-166, Val-168, Asp-197, Gly-198, Ala-199, and Asn-226. Residue Asp-197 coordinates Mg(2+). The Mg(2+) site is built by Asn-226 and Tyr-228. His-292 provides a ligand contact to thiamine diphosphate. Positions 293 to 312 (SMSDPGSTYRTRDEISGVRQ) are disordered. Basic and acidic residues predominate over residues 302-312 (RTRDEISGVRQ).

As to quaternary structure, tetramer of 2 alpha and 2 beta subunits. Requires thiamine diphosphate as cofactor. It depends on Mg(2+) as a cofactor.

It localises to the mitochondrion matrix. The catalysed reaction is N(6)-[(R)-lipoyl]-L-lysyl-[protein] + pyruvate + H(+) = N(6)-[(R)-S(8)-acetyldihydrolipoyl]-L-lysyl-[protein] + CO2. Its function is as follows. The pyruvate dehydrogenase complex catalyzes the overall conversion of pyruvate to acetyl-CoA and CO(2). It contains multiple copies of three enzymatic components: pyruvate dehydrogenase (E1), dihydrolipoamide acetyltransferase (E2) and lipoamide dehydrogenase (E3). This chain is Pyruvate dehydrogenase E1 component subunit alpha-1, mitochondrial, found in Oryza sativa subsp. japonica (Rice).